The primary structure comprises 314 residues: Deoxymugineic acid synthase 1 (314 aa).

Residue aspartate 44 participates in NADP(+) binding. Tyrosine 49 (proton donor) is an active-site residue. Histidine 112 is a substrate binding site. NADP(+)-binding positions include 158–159 (CN), glutamine 180, 258–266 (FDEGRMKEN), and 273–281 (ELSEEERQR).

This sequence belongs to the aldo/keto reductase family.

It carries out the reaction 2'-deoxymugineate + NAD(+) = 3''-deamino-3''-oxonicotianamine + NADH + H(+). It catalyses the reaction 2'-deoxymugineate + NADP(+) = 3''-deamino-3''-oxonicotianamine + NADPH + H(+). It participates in siderophore biosynthesis. In terms of biological role, catalyzes the reduction of a 3''-keto intermediate during the biosynthesis of 2'-deoxymugineic acid (DMA) from L-Met. Involved in the formation of phytosiderophores (MAs) belonging to the mugineic acid family and required to acquire iron. The sequence is that of Deoxymugineic acid synthase 1 from Zea mays (Maize).